The primary structure comprises 229 residues: Probable septum site-determining protein MinC (229 aa).

This sequence belongs to the MinC family. As to quaternary structure, interacts with MinD and FtsZ.

Functionally, cell division inhibitor that blocks the formation of polar Z ring septums. Rapidly oscillates between the poles of the cell to destabilize FtsZ filaments that have formed before they mature into polar Z rings. Prevents FtsZ polymerization. This chain is Probable septum site-determining protein MinC, found in Ruminiclostridium cellulolyticum (strain ATCC 35319 / DSM 5812 / JCM 6584 / H10) (Clostridium cellulolyticum).